Consider the following 219-residue polypeptide: uncharacterized protein (219 aa).

Basic and acidic residues-rich tracts occupy residues M1–R20, A30–V39, and Q156–R170. The disordered stretch occupies residues M1–G195.

This sequence belongs to the MISP family.

This is an uncharacterized protein from Homo sapiens (Human).